Reading from the N-terminus, the 610-residue chain is Elongation factor 4 (610 aa).

A tr-type G domain is found at 14 to 196 (NRIRNFSIIA…ALVANIPPPK (183 aa)). GTP-binding positions include 26–31 (DHGKST) and 143–146 (NKID).

The protein belongs to the TRAFAC class translation factor GTPase superfamily. Classic translation factor GTPase family. LepA subfamily.

The protein resides in the cell inner membrane. The catalysed reaction is GTP + H2O = GDP + phosphate + H(+). Functionally, required for accurate and efficient protein synthesis under certain stress conditions. May act as a fidelity factor of the translation reaction, by catalyzing a one-codon backward translocation of tRNAs on improperly translocated ribosomes. Back-translocation proceeds from a post-translocation (POST) complex to a pre-translocation (PRE) complex, thus giving elongation factor G a second chance to translocate the tRNAs correctly. Binds to ribosomes in a GTP-dependent manner. The protein is Elongation factor 4 of Legionella pneumophila (strain Paris).